We begin with the raw amino-acid sequence, 86 residues long: Translation initiation factor IF-1 2 (86 aa).

Residues 1 to 72 (MAKEELLEME…TKARISFRHK (72 aa)) form the S1-like domain.

This sequence belongs to the IF-1 family. Component of the 30S ribosomal translation pre-initiation complex which assembles on the 30S ribosome in the order IF-2 and IF-3, IF-1 and N-formylmethionyl-tRNA(fMet); mRNA recruitment can occur at any time during PIC assembly.

Its subcellular location is the cytoplasm. Functionally, one of the essential components for the initiation of protein synthesis. Stabilizes the binding of IF-2 and IF-3 on the 30S subunit to which N-formylmethionyl-tRNA(fMet) subsequently binds. Helps modulate mRNA selection, yielding the 30S pre-initiation complex (PIC). Upon addition of the 50S ribosomal subunit IF-1, IF-2 and IF-3 are released leaving the mature 70S translation initiation complex. The polypeptide is Translation initiation factor IF-1 2 (Aromatoleum aromaticum (strain DSM 19018 / LMG 30748 / EbN1) (Azoarcus sp. (strain EbN1))).